We begin with the raw amino-acid sequence, 320 residues long: Histidine decarboxylase proenzyme (320 aa).

Residues 2-11 (NKNLEANRNR) constitute a propeptide that is removed on maturation. Serine 98 is subject to Pyruvic acid (Ser). Glutamate 215 (proton donor) is an active-site residue.

As to quaternary structure, the proenzyme is a hexamer of identical pi chains; each pi chain monomer is cleaved to form a small (or beta) chain and a large (or alpha) chain by non-hydrolytic self-catalysis. The cofactor is pyruvate.

It catalyses the reaction L-histidine + H(+) = histamine + CO2. This is Histidine decarboxylase proenzyme (hdc) from Clostridium perfringens (strain ATCC 13124 / DSM 756 / JCM 1290 / NCIMB 6125 / NCTC 8237 / Type A).